The chain runs to 233 residues: Large ribosomal subunit protein uL1 (233 aa).

Belongs to the universal ribosomal protein uL1 family. Part of the 50S ribosomal subunit.

Its function is as follows. Binds directly to 23S rRNA. The L1 stalk is quite mobile in the ribosome, and is involved in E site tRNA release. Functionally, protein L1 is also a translational repressor protein, it controls the translation of the L11 operon by binding to its mRNA. In Polynucleobacter asymbioticus (strain DSM 18221 / CIP 109841 / QLW-P1DMWA-1) (Polynucleobacter necessarius subsp. asymbioticus), this protein is Large ribosomal subunit protein uL1.